A 359-amino-acid chain; its full sequence is 3-dehydroquinate synthase (359 aa).

NAD(+) is bound by residues 106 to 110 (GVVGD), 130 to 131 (TT), K143, K152, and 170 to 173 (TLQT). Zn(2+) contacts are provided by E185, H248, and H265.

It belongs to the sugar phosphate cyclases superfamily. Dehydroquinate synthase family. The cofactor is Co(2+). Requires Zn(2+) as cofactor. It depends on NAD(+) as a cofactor.

Its subcellular location is the cytoplasm. It carries out the reaction 7-phospho-2-dehydro-3-deoxy-D-arabino-heptonate = 3-dehydroquinate + phosphate. The protein operates within metabolic intermediate biosynthesis; chorismate biosynthesis; chorismate from D-erythrose 4-phosphate and phosphoenolpyruvate: step 2/7. Functionally, catalyzes the conversion of 3-deoxy-D-arabino-heptulosonate 7-phosphate (DAHP) to dehydroquinate (DHQ). This Desulforamulus reducens (strain ATCC BAA-1160 / DSM 100696 / MI-1) (Desulfotomaculum reducens) protein is 3-dehydroquinate synthase.